A 211-amino-acid chain; its full sequence is MQDRKPQQIARELALLSLSQLPLNPKKLTEEHLPKLVLATVRTLRAEVQDTLDNAAAELQRSNDRLLTSQTRASDLNTARNMLQEAISHTQTAINQLGASVEFPELIQLANQDKEVGRYAIKLVKIINEERGMIDEQITSALVDWQVTRLAQIDRDILRIAVAEMMFLNLPNSVAINEAVELAKRYSGDEGHRFINGVLRRVSDQKKALSV.

The protein belongs to the NusB family.

In terms of biological role, involved in transcription antitermination. Required for transcription of ribosomal RNA (rRNA) genes. Binds specifically to the boxA antiterminator sequence of the ribosomal RNA (rrn) operons. This is Transcription antitermination protein NusB from Trichormus variabilis (strain ATCC 29413 / PCC 7937) (Anabaena variabilis).